A 212-amino-acid chain; its full sequence is uncharacterized protein (212 aa).

S-adenosyl-L-methionine is bound by residues G53, E74, and D97.

It belongs to the methyltransferase superfamily. YrrT family.

Its function is as follows. Could be a S-adenosyl-L-methionine-dependent methyltransferase. This is an uncharacterized protein from Bacillus cereus (strain ZK / E33L).